The chain runs to 426 residues: Phosphoribosylamine--glycine ligase (426 aa).

The 208-residue stretch at 113 to 320 (KSLMTEAKIP…LLELLYRAST (208 aa)) folds into the ATP-grasp domain. 139–200 (LESKSIPIVI…EEFMEGQEAS (62 aa)) contributes to the ATP binding site. Residues Glu-290 and Asn-292 each contribute to the Mg(2+) site.

Belongs to the GARS family. Mg(2+) is required as a cofactor. The cofactor is Mn(2+).

It catalyses the reaction 5-phospho-beta-D-ribosylamine + glycine + ATP = N(1)-(5-phospho-beta-D-ribosyl)glycinamide + ADP + phosphate + H(+). It functions in the pathway purine metabolism; IMP biosynthesis via de novo pathway; N(1)-(5-phospho-D-ribosyl)glycinamide from 5-phospho-alpha-D-ribose 1-diphosphate: step 2/2. The sequence is that of Phosphoribosylamine--glycine ligase from Leptospira interrogans serogroup Icterohaemorrhagiae serovar copenhageni (strain Fiocruz L1-130).